We begin with the raw amino-acid sequence, 114 residues long: DNA-directed RNA polymerase subunit omega (114 aa).

This sequence belongs to the RNA polymerase subunit omega family. As to quaternary structure, the RNAP catalytic core consists of 2 alpha, 1 beta, 1 beta' and 1 omega subunit. When a sigma factor is associated with the core the holoenzyme is formed, which can initiate transcription.

It carries out the reaction RNA(n) + a ribonucleoside 5'-triphosphate = RNA(n+1) + diphosphate. Functionally, promotes RNA polymerase assembly. Latches the N- and C-terminal regions of the beta' subunit thereby facilitating its interaction with the beta and alpha subunits. This Novosphingobium aromaticivorans (strain ATCC 700278 / DSM 12444 / CCUG 56034 / CIP 105152 / NBRC 16084 / F199) protein is DNA-directed RNA polymerase subunit omega.